The primary structure comprises 167 residues: S-ribosylhomocysteine lyase (167 aa).

Residues histidine 54, histidine 58, and cysteine 128 each contribute to the Fe cation site.

The protein belongs to the LuxS family. Homodimer. Fe cation is required as a cofactor.

It carries out the reaction S-(5-deoxy-D-ribos-5-yl)-L-homocysteine = (S)-4,5-dihydroxypentane-2,3-dione + L-homocysteine. Its function is as follows. Involved in the synthesis of autoinducer 2 (AI-2) which is secreted by bacteria and is used to communicate both the cell density and the metabolic potential of the environment. The regulation of gene expression in response to changes in cell density is called quorum sensing. Catalyzes the transformation of S-ribosylhomocysteine (RHC) to homocysteine (HC) and 4,5-dihydroxy-2,3-pentadione (DPD). In Haemophilus influenzae (strain PittGG), this protein is S-ribosylhomocysteine lyase.